Consider the following 805-residue polypeptide: Ubiquitin carboxyl-terminal hydrolase 5 (805 aa).

Residues 159–283 (HGDALLLIDV…WVKLGGAYQS (125 aa)) enclose the Rhodanese domain. The tract at residues 359 to 380 (RNSPTVQKFSPHPPTTLSKLNT) is disordered. The USP domain maps to 446-804 (VGLENIGNCC…SAYVLFYERI (359 aa)). Cys-455 (nucleophile) is an active-site residue. His-761 serves as the catalytic Proton acceptor.

Belongs to the peptidase C19 family.

It catalyses the reaction Thiol-dependent hydrolysis of ester, thioester, amide, peptide and isopeptide bonds formed by the C-terminal Gly of ubiquitin (a 76-residue protein attached to proteins as an intracellular targeting signal).. The chain is Ubiquitin carboxyl-terminal hydrolase 5 (UBP5) from Saccharomyces cerevisiae (strain ATCC 204508 / S288c) (Baker's yeast).